We begin with the raw amino-acid sequence, 146 residues long: Protein cornichon homolog 1 (146 aa).

A run of 3 helical transmembrane segments spans residues 9-29 (IVSFFVSLALVASVFYQVICL), 61-81 (CLLFLLTWHWVFFLVAVPVTV), and 114-134 (LGFYVFLFIMVVFRLTLSAVY).

This sequence belongs to the cornichon family.

Its subcellular location is the membrane. The protein is Protein cornichon homolog 1 of Arabidopsis thaliana (Mouse-ear cress).